The chain runs to 1418 residues: Chromatin remodeling factor mit1 (1418 aa).

Residues 135–148 (DETASDSATSSSSD) are compositionally biased toward low complexity. Residues 135–156 (DETASDSATSSSSDTNKKVNRK) are disordered. Residues 212 to 271 (VCVCVKCHGREHRSSGKNFVYCDHCSNVYHYDCSPLPSLNKETRNYSQQNGFICPLCSKN) form a PHD-type zinc finger. The RING-type; atypical zinc finger occupies 215–269 (CVKCHGREHRSSGKNFVYCDHCSNVYHYDCSPLPSLNKETRNYSQQNGFICPLCS). The Helicase ATP-binding domain maps to 568–738 (YLRWYTHHPC…FNLLQFLNPM (171 aa)). 581–588 (DEMGLGKT) lines the ATP pocket. In terms of domain architecture, Helicase C-terminal spans 875–1034 (ILRLLVPKLI…QNHNSEKDLE (160 aa)).

It belongs to the SNF2/RAD54 helicase family. In terms of assembly, interacts with clr3.

Its subcellular location is the nucleus. It localises to the chromosome. The protein resides in the centromere. It is found in the telomere. Its function is as follows. Required for proper positioning of nucleosomes at heterochromatic loci and for transcriptional gene silencing (TGS) function of the Snf2/Hdac-containing repressor complex (SHREC). The chain is Chromatin remodeling factor mit1 (mit1) from Schizosaccharomyces pombe (strain 972 / ATCC 24843) (Fission yeast).